A 226-amino-acid chain; its full sequence is Lipoprotein-releasing system ATP-binding protein LolD (226 aa).

An ABC transporter domain is found at 6 to 226; it reads LSVEQVSKSF…QLQQGSLIRI (221 aa). 42–49 is a binding site for ATP; the sequence is GESGCGKS.

The protein belongs to the ABC transporter superfamily. Lipoprotein translocase (TC 3.A.1.125) family. In terms of assembly, the complex is composed of two ATP-binding proteins (LolD) and two transmembrane proteins (LolC and LolE).

The protein localises to the cell inner membrane. Functionally, part of the ABC transporter complex LolCDE involved in the translocation of mature outer membrane-directed lipoproteins, from the inner membrane to the periplasmic chaperone, LolA. Responsible for the formation of the LolA-lipoprotein complex in an ATP-dependent manner. The sequence is that of Lipoprotein-releasing system ATP-binding protein LolD from Treponema pallidum (strain Nichols).